We begin with the raw amino-acid sequence, 445 residues long: Ribosomal protein uS12 methylthiotransferase RimO (445 aa).

One can recognise an MTTase N-terminal domain in the interval 10-120 (PKVGFVSLGC…VVNAVHEVVP (111 aa)). Positions 19, 55, 84, 153, 157, and 160 each coordinate [4Fe-4S] cluster. A Radical SAM core domain is found at 139–378 (LTPRHYAYLK…AHQQAISSAR (240 aa)). In terms of domain architecture, TRAM spans 380-445 (QLRIGREIEV…DEYDLWAEQI (66 aa)).

It belongs to the methylthiotransferase family. RimO subfamily. [4Fe-4S] cluster is required as a cofactor.

The protein resides in the cytoplasm. The catalysed reaction is L-aspartate(89)-[ribosomal protein uS12]-hydrogen + (sulfur carrier)-SH + AH2 + 2 S-adenosyl-L-methionine = 3-methylsulfanyl-L-aspartate(89)-[ribosomal protein uS12]-hydrogen + (sulfur carrier)-H + 5'-deoxyadenosine + L-methionine + A + S-adenosyl-L-homocysteine + 2 H(+). Catalyzes the methylthiolation of an aspartic acid residue of ribosomal protein uS12. The chain is Ribosomal protein uS12 methylthiotransferase RimO from Pseudomonas fluorescens (strain Pf0-1).